The chain runs to 417 residues: D-amino acid dehydrogenase (417 aa).

An FAD-binding site is contributed by 3–17; that stretch reads AVVLGSGVVGLMSAW.

It belongs to the DadA oxidoreductase family. It depends on FAD as a cofactor.

It catalyses the reaction a D-alpha-amino acid + A + H2O = a 2-oxocarboxylate + AH2 + NH4(+). In terms of biological role, oxidative deamination of D-amino acids. The sequence is that of D-amino acid dehydrogenase from Vibrio vulnificus (strain YJ016).